Reading from the N-terminus, the 141-residue chain is Putative pre-16S rRNA nuclease (141 aa).

It belongs to the YqgF nuclease family.

The protein resides in the cytoplasm. Its function is as follows. Could be a nuclease involved in processing of the 5'-end of pre-16S rRNA. This Cupriavidus taiwanensis (strain DSM 17343 / BCRC 17206 / CCUG 44338 / CIP 107171 / LMG 19424 / R1) (Ralstonia taiwanensis (strain LMG 19424)) protein is Putative pre-16S rRNA nuclease.